Here is a 424-residue protein sequence, read N- to C-terminus: MKTIRIIGAGLSGCEAAYYLLKKGYFVELYEIKTIKKNPIQHYDYFCELAYSDSFRSTDLNTSVGTLKKELELLDSLIIKAAKYASINQNNELVVNRIEFSKYITNYLKTFNNLKIIEQEYLNIDLNIPTIIAIGPISTPSFLTNLKKIINKKNLKLFDTVEPTILKQSINKNICYSLDNNLDYLYCDLNKEQFEKFYNALISAKTFNSPLKNEIKLLEKNNYFSIESLAKNKQEFINHFKPINNNAYITITLKKDSVIDNLYTIVNFQTSLMWNEQLKVFSLIPGLENLKIMRYGVMHKNNYINTKKLLNLGVQLKTNKNIFFAGQIIGVDGYVESVCSGLISAINLDRYLNNKKMILPNKNSTIGSLYNYLLKTDSNFNPMRINWALVDLIDGFELSDNSKKFYSKRAIELIKQYLKKINYK.

An FAD-binding site is contributed by 8 to 13; the sequence is GAGLSG.

The protein belongs to the MnmG family. TrmFO subfamily. The cofactor is FAD.

The protein localises to the cytoplasm. The catalysed reaction is uridine(54) in tRNA + (6R)-5,10-methylene-5,6,7,8-tetrahydrofolate + NADH + H(+) = 5-methyluridine(54) in tRNA + (6S)-5,6,7,8-tetrahydrofolate + NAD(+). It catalyses the reaction uridine(54) in tRNA + (6R)-5,10-methylene-5,6,7,8-tetrahydrofolate + NADPH + H(+) = 5-methyluridine(54) in tRNA + (6S)-5,6,7,8-tetrahydrofolate + NADP(+). Catalyzes the folate-dependent formation of 5-methyl-uridine at position 54 (M-5-U54) in all tRNAs. This chain is Methylenetetrahydrofolate--tRNA-(uracil-5-)-methyltransferase TrmFO 1, found in Mycoplasma mycoides subsp. mycoides SC (strain CCUG 32753 / NCTC 10114 / PG1).